Consider the following 61-residue polypeptide: Small ribosomal subunit protein uS14 (61 aa).

Cys24, Cys27, Cys40, and Cys43 together coordinate Zn(2+).

Belongs to the universal ribosomal protein uS14 family. Zinc-binding uS14 subfamily. As to quaternary structure, part of the 30S ribosomal subunit. Contacts proteins S3 and S10. It depends on Zn(2+) as a cofactor.

Its function is as follows. Binds 16S rRNA, required for the assembly of 30S particles and may also be responsible for determining the conformation of the 16S rRNA at the A site. This is Small ribosomal subunit protein uS14 from Dictyoglomus turgidum (strain DSM 6724 / Z-1310).